The primary structure comprises 279 residues: Complement component 1 Q subcomponent-binding protein, mitochondrial (279 aa).

The transit peptide at 1-71 (MLPLLRCVPR…PVPCACGCGA (71 aa)) directs the protein to the mitochondrion. The interval 74–91 (TEGDKAFVEFLTDEIKEE) is C1q binding. 2 positions are modified to N6-acetyllysine: lysine 89 and lysine 92. Positions 134-162 (NNSIPPTFDGEEEPSQGQKAEEQEPELTS) are disordered. Positions 166 to 210 (FVVEVTKTDGKKTLVLDCHYPEDEIGHEDEAESDIFSIKEVSFQT) are interaction with MAVS. Residue tyrosine 185 is modified to Phosphotyrosine. Phosphoserine is present on residues serine 198 and serine 202. Position 211 is a phosphothreonine (threonine 211).

It belongs to the MAM33 family. As to quaternary structure, homotrimer; three monomers form a donut-shaped structure with an unusually asymmetric charge distribution on the surface. Interacts with CDK13, HRK, VTN, NFYB, ADRA1B, FOXC1, DDX21, DDX50, NCL, SRSF1 and SRSF9. Interacts with CD93; the association may represent a cell surface C1q receptor. Interacts with KRT1; the association represents a cell surface kininogen receptor. Interacts with CD209; the interaction is indicative for a C1q:C1QBP:CD209 signaling complex. Interacts with FBL and RRP1; the respective interactions with C1QBP are competitive. Probably associates with the mitoribosome. Interacts with MAVS; the interaction occurs upon viral transfection. Interacts with PPIF. Interacts with U2AF1L4. Interacts with PLEKHN1. Interacts with VGF-derived peptide TLQP-21. Interacts with MRE11 and RAD50; forming the MRC (MRE11-RAD50-C1QBP) complex that inhibits the activity of MRE11. Ubiquitous.

Its subcellular location is the mitochondrion matrix. It is found in the nucleus. The protein localises to the cell membrane. It localises to the secreted. The protein resides in the cytoplasm. Its subcellular location is the nucleolus. Functionally, multifunctional and multicompartmental protein involved in inflammation and infection processes, ribosome biogenesis, protein synthesis in mitochondria, regulation of apoptosis, transcriptional regulation and pre-mRNA splicing. At the cell surface is thought to act as an endothelial receptor for plasma proteins of the complement and kallikrein-kinin cascades. Putative receptor for C1q; specifically binds to the globular 'heads' of C1q thus inhibiting C1; may perform the receptor function through a complex with C1qR/CD93. In complex with cytokeratin-1/KRT1 is a high affinity receptor for kininogen-1/HMWK. Can also bind other plasma proteins, such as coagulation factor XII leading to its autoactivation. May function to bind initially fluid kininogen-1 to the cell membrane. The secreted form may enhance both extrinsic and intrinsic coagulation pathways. It is postulated that the cell surface form requires docking with transmembrane proteins for downstream signaling which might be specific for a cell-type or response. By acting as C1q receptor is involved in chemotaxis of immature dendritic cells and neutrophils and is proposed to signal through CD209/DC-SIGN on immature dendritic cells, through integrin alpha-4/beta-1 during trophoblast invasion of the decidua, and through integrin beta-1 during endothelial cell adhesion and spreading. Signaling involved in inhibition of innate immune response is implicating the PI3K-AKT/PKB pathway. Required for protein synthesis in mitochondria. In mitochondrial translation may be involved in formation of functional 55S mitoribosomes; the function seems to involve its RNA-binding activity. Acts as a RNA modification reader, which specifically recognizes and binds mitochondrial RNAs modified by C5-methylcytosine (m5C) in response to stress, and promotes recruitment of the mitochondrial degradosome complex, leading to their degradation. May be involved in the nucleolar ribosome maturation process; the function may involve the exchange of FBL for RRP1 in the association with pre-ribosome particles. Involved in regulation of RNA splicing by inhibiting the RNA-binding capacity of SRSF1 and its phosphorylation. Is required for the nuclear translocation of splicing factor U2AF1L4. Involved in regulation of CDKN2A- and HRK-mediated apoptosis. Stabilizes mitochondrial CDKN2A isoform smARF. May be involved in regulation of FOXC1 transcriptional activity and NFY/CCAAT-binding factor complex-mediated transcription. May play a role in antibacterial defense as it can bind to cell surface hyaluronan and inhibit Streptococcus pneumoniae hyaluronate lyase. May be involved in modulation of the immune response; ligation by HCV core protein is resulting in suppression of interleukin-12 production in monocyte-derived dendritic cells. Involved in regulation of antiviral response by inhibiting RIGI- and IFIH1-mediated signaling pathways probably involving its association with MAVS after viral infection. Acts as a regulator of DNA repair via homologous recombination by inhibiting the activity of MRE11: interacts with unphosphorylated MRE11 and RAD50 in absence of DNA damage, preventing formation and activity of the MRN complex. Following DNA damage, dissociates from phosphorylated MRE11, allowing formation of the MRN complex. The sequence is that of Complement component 1 Q subcomponent-binding protein, mitochondrial (C1qbp) from Rattus norvegicus (Rat).